A 218-amino-acid polypeptide reads, in one-letter code: Ras-related protein R-Ras (218 aa).

Residues 1–30 are disordered; that stretch reads MSSGAASGTGRGRPRGGGPGPGDPPPSETH. Residues 7–20 are compositionally biased toward gly residues; it reads SGTGRGRPRGGGPG. 36-44 contributes to the GTP binding site; sequence GGGGVGKSA. The short motif at 58-66 is the Effector region element; the sequence is YDPTIEDSY. Residues 83–87, 142–145, and 172–174 contribute to the GTP site; these read DTAGQ, NKAD, and SAK. C215 is subject to Cysteine methyl ester. A lipid anchor (S-geranylgeranyl cysteine) is attached at C215. A propeptide spans 216–218 (removed in mature form); the sequence is VLL.

The protein belongs to the small GTPase superfamily. Ras family. As to quaternary structure, interacts with PLCE1. Interacts (active GTP-bound form preferentially) with RGS14. Interacts with OSBPL3. Interacts with ZDHHC19. S-palmitoylated by ZDHHC19, leading to increased association with membranes and with rafts/caveolae as well as enhanced cell viability.

The protein resides in the cell membrane. The enzyme catalyses GTP + H2O = GDP + phosphate + H(+). Its function is as follows. GTP-binding protein with GTPase activity, likely involved in the regulation of MAPK signaling pathway and thereby controlling multiple cellular processes. Regulates the organization of the actin cytoskeleton. With OSPBL3, modulates integrin beta-1 (ITGB1) activity. This is Ras-related protein R-Ras (RRAS) from Homo sapiens (Human).